The following is a 199-amino-acid chain: Protein GrpE (199 aa).

Residues Met-1–Leu-27 are disordered. Residues Asp-18–Leu-27 are compositionally biased toward basic and acidic residues.

Belongs to the GrpE family. Homodimer.

Its subcellular location is the cytoplasm. Functionally, participates actively in the response to hyperosmotic and heat shock by preventing the aggregation of stress-denatured proteins, in association with DnaK and GrpE. It is the nucleotide exchange factor for DnaK and may function as a thermosensor. Unfolded proteins bind initially to DnaJ; upon interaction with the DnaJ-bound protein, DnaK hydrolyzes its bound ATP, resulting in the formation of a stable complex. GrpE releases ADP from DnaK; ATP binding to DnaK triggers the release of the substrate protein, thus completing the reaction cycle. Several rounds of ATP-dependent interactions between DnaJ, DnaK and GrpE are required for fully efficient folding. The polypeptide is Protein GrpE (Psychrobacter sp. (strain St1)).